A 207-amino-acid chain; its full sequence is Large ribosomal subunit protein uL4 (207 aa).

Residues 48 to 78 (THKVKTRSEVRGGGRKPWRQKGTGRARQGSI) form a disordered region. The segment covering 60–71 (GGRKPWRQKGTG) has biased composition (basic residues).

This sequence belongs to the universal ribosomal protein uL4 family. Part of the 50S ribosomal subunit.

Functionally, one of the primary rRNA binding proteins, this protein initially binds near the 5'-end of the 23S rRNA. It is important during the early stages of 50S assembly. It makes multiple contacts with different domains of the 23S rRNA in the assembled 50S subunit and ribosome. Its function is as follows. Forms part of the polypeptide exit tunnel. The polypeptide is Large ribosomal subunit protein uL4 (Bacillus pumilus (strain SAFR-032)).